The sequence spans 295 residues: Protein FAM221A (295 aa).

Over residues Gln272–Arg283 the composition is skewed to basic and acidic residues. The segment at Gln272–Pro295 is disordered.

This sequence belongs to the FAM221 family.

This chain is Protein FAM221A (fam221a), found in Xenopus tropicalis (Western clawed frog).